The chain runs to 346 residues: DNA-directed RNA polymerase subunit alpha (346 aa).

Positions 1-243 are alpha N-terminal domain (alpha-NTD); sequence MTMNNPNLTM…EQLSIWVNFE (243 aa). The segment at 260–346 is alpha C-terminal domain (alpha-CTD); that stretch reads LNENLFRSVE…ERWKAQQAQA (87 aa).

The protein belongs to the RNA polymerase alpha chain family. As to quaternary structure, homodimer. The RNAP catalytic core consists of 2 alpha, 1 beta, 1 beta' and 1 omega subunit. When a sigma factor is associated with the core the holoenzyme is formed, which can initiate transcription.

It catalyses the reaction RNA(n) + a ribonucleoside 5'-triphosphate = RNA(n+1) + diphosphate. Its function is as follows. DNA-dependent RNA polymerase catalyzes the transcription of DNA into RNA using the four ribonucleoside triphosphates as substrates. The chain is DNA-directed RNA polymerase subunit alpha from Sorangium cellulosum (strain So ce56) (Polyangium cellulosum (strain So ce56)).